We begin with the raw amino-acid sequence, 296 residues long: Probable xyloglucan endotransglucosylase/hydrolase 1 (296 aa).

A signal peptide spans 1 to 22 (MGIIKGVLFSIVLINLSLVVFC). The GH16 domain occupies 23–221 (GYPRRPVDVP…WANAPFTASY (199 aa)). Catalysis depends on glutamate 107, which acts as the Nucleophile. Glutamate 111 (proton donor) is an active-site residue. Glutamate 111 is a binding site for xyloglucan. The N-linked (GlcNAc...) asparagine glycan is linked to asparagine 115. Residues 124–126 (QTN), 134–136 (NRE), 200–201 (DW), and glycine 205 contribute to the xyloglucan site. Cystine bridges form between cysteine 229–cysteine 240 and cysteine 277–cysteine 290. Position 282 (arginine 282) interacts with xyloglucan.

Belongs to the glycosyl hydrolase 16 family. XTH group 1 subfamily. In terms of processing, contains at least one intrachain disulfide bond essential for its enzymatic activity.

The protein localises to the secreted. It is found in the cell wall. The protein resides in the extracellular space. Its subcellular location is the apoplast. It carries out the reaction breaks a beta-(1-&gt;4) bond in the backbone of a xyloglucan and transfers the xyloglucanyl segment on to O-4 of the non-reducing terminal glucose residue of an acceptor, which can be a xyloglucan or an oligosaccharide of xyloglucan.. Functionally, catalyzes xyloglucan endohydrolysis (XEH) and/or endotransglycosylation (XET). Cleaves and religates xyloglucan polymers, an essential constituent of the primary cell wall, and thereby participates in cell wall construction of growing tissues. This is Probable xyloglucan endotransglucosylase/hydrolase 1 (XTH1) from Solanum lycopersicum (Tomato).